The primary structure comprises 832 residues: MGRNRSGCVARCVSLTALVLLLCCPVVRSSEAETDPDSHTEHGDSHGGSREGNDTGFQIVTFRWEHVQTPYVIALWILVASLGKIVFHLSEKVTSVVPESALLIVLGLILGGIVWAADHSASFTLTPTVFFFYLLPPIVLDAGYFMPNRHFFGNLGTILTYAVIGTVWNAATTGLSLYGVFLLGLMGDLKAGLLEFLLFGSLIAAVDPVAVLAVFEEVHVNEVLFIIVFGESLLNDAVTVVLYNVFNSFVEVGAGNVQGLDYFKGIVSFFVVSLGGTAVGIIFAFILSLVTRFTKHVRVIEPGFVFVISYLSYLTADMLSLSAILAITFCGICCQKYVKANLCEQSITTVRYAMKMLASGAETIIFMFLGISAVNPTIWTWNTAFILLTLVFISVYRVIGVVIQTWILNHYRVVQLEIIDQVVMSYGGLRGAVAFALVVLLDSNYVGERRLFVSTTIIVVYFTVIFQGLTIKPLVKWLKVKRSQHKEPLLNEKLHGRAFDHILSAIEDISGQIGHNYLRDKWTNFDRKYLSKIMMRKSAQISRDKILSVFRELNLKDAISYVSEGERKGSLAFIRSSSDVNVDFTGPRHSVVDSSVSAVLRESTSEVCLDMHAVENRAKSPKDREEIVTHHMLQQHLYKPRKRYRLNYSRHKLARSEGEKQDKEIFQRTMKKRLENFKPTKLGTNYTTKFRNMKKERAAKKKHSDAVPNGRLATHSVSFHVNKDSEVEDPADGGISFLITPASNDADETGTGIDNPSFSNEEDQSIYQMIPPWISNEETVIPSQRARLQIPRSPTNFRRLTPLQLSNRSIDAFLLADISDEHPLSFLPESSM.

The signal sequence occupies residues 1 to 29 (MGRNRSGCVARCVSLTALVLLLCCPVVRS). Topologically, residues 30 to 66 (SEAETDPDSHTEHGDSHGGSREGNDTGFQIVTFRWEH) are extracellular. Positions 31–51 (EAETDPDSHTEHGDSHGGSRE) are disordered. The segment covering 36–51 (PDSHTEHGDSHGGSRE) has biased composition (basic and acidic residues). A helical membrane pass occupies residues 67-89 (VQTPYVIALWILVASLGKIVFHL). Residues 90 to 97 (SEKVTSVV) are Cytoplasmic-facing. A helical transmembrane segment spans residues 98–117 (PESALLIVLGLILGGIVWAA). The Extracellular segment spans residues 118–126 (DHSASFTLT). A helical transmembrane segment spans residues 127–144 (PTVFFFYLLPPIVLDAGY). At 145–147 (FMP) the chain is on the cytoplasmic side. A helical transmembrane segment spans residues 148–183 (NRHFFGNLGTILTYAVIGTVWNAATTGLSLYGVFLL). Residues G153, G156, and T157 each coordinate a 1,2-diacyl-sn-glycero-3-phospho-(1D-myo-inositol). Residues 184–196 (GLMGDLKAGLLEF) lie on the Extracellular side of the membrane. A helical membrane pass occupies residues 197–218 (LLFGSLIAAVDPVAVLAVFEEV). Over 219-220 (HV) the chain is Cytoplasmic. The helical transmembrane segment at 221-252 (NEVLFIIVFGESLLNDAVTVVLYNVFNSFVEV) threads the bilayer. Topologically, residues 253–259 (GAGNVQG) are extracellular. Residues 260–294 (LDYFKGIVSFFVVSLGGTAVGIIFAFILSLVTRFT) form a helical membrane-spanning segment. The Cytoplasmic portion of the chain corresponds to 295-296 (KH). The chain crosses the membrane as a helical span at residues 297 to 319 (VRVIEPGFVFVISYLSYLTADML). At 320-321 (SL) the chain is on the extracellular side. The chain crosses the membrane as a helical span at residues 322-338 (SAILAITFCGICCQKYV). Residues 339 to 345 (KANLCEQ) lie on the Cytoplasmic side of the membrane. A helical transmembrane segment spans residues 346-374 (SITTVRYAMKMLASGAETIIFMFLGISAV). The Extracellular segment spans residues 375-382 (NPTIWTWN). The helical transmembrane segment at 383 to 404 (TAFILLTLVFISVYRVIGVVIQ) threads the bilayer. The Cytoplasmic segment spans residues 405–417 (TWILNHYRVVQLE). A helical transmembrane segment spans residues 418-441 (IIDQVVMSYGGLRGAVAFALVVLL). At 442 to 448 (DSNYVGE) the chain is on the extracellular side. Residues 449-482 (RRLFVSTTIIVVYFTVIFQGLTIKPLVKWLKVKR) form a helical membrane-spanning segment. Residues 483 to 832 (SQHKEPLLNE…PLSFLPESSM (350 aa)) lie on the Cytoplasmic side of the membrane. A 1,2-diacyl-sn-glycero-3-phospho-(1D-myo-inositol)-binding residues include Q512, I513, and H515. The segment at 740 to 760 (TPASNDADETGTGIDNPSFSN) is disordered.

The protein belongs to the monovalent cation:proton antiporter 1 (CPA1) transporter (TC 2.A.36) family. In terms of assembly, homodimer. Detected in early distal renal tubules in the kidney bundle zone, in proximal and late distal tubules in the kidney sinus zone, in absorptive epithelial cells of the intestine and in rectal epithelium (at protein level). Isoform 1 is expressed strongly in the gills, at intermediate levels in the kidney, spleen, rectum, spiral intestine and skin, and weakly in the brain, blood and rectal gland. Isoform 2 is expressed strongly in the kidney, rectum and spiral intestine, and weakly in muscles and the rectal gland.

Its subcellular location is the apical cell membrane. The protein resides in the cell membrane. The protein localises to the recycling endosome membrane. It is found in the early endosome membrane. The catalysed reaction is Na(+)(in) + H(+)(out) = Na(+)(out) + H(+)(in). Seems to switch between active and inactive modes in response to various stimuli. Activated directly or indirectly by membrane phosphatidylinositol (PIs). Regulated by a variety of auxiliary proteins, which facilitate the maturation, cell surface expression and function of the transporter. Inhibited specifically by the drug tenapanor. Plasma membrane Na(+)/H(+) antiporter. Exchanges intracellular H(+) ions for extracellular Na(+) in 1:1 stoichiometry, playing a key role in salt and fluid absorption and pH homeostasis. Major apical Na(+)/H(+) exchanger in kidney and intestine playing an important role in renal and intestine Na(+) absorption and blood pressure regulation. The polypeptide is Sodium/hydrogen exchanger 3 (Triakis scyllium (Banded houndshark)).